We begin with the raw amino-acid sequence, 71 residues long: Sec-independent protein translocase protein TatA (71 aa).

A helical transmembrane segment spans residues 1–21; the sequence is MGASPVQLLIVLFIAVLVFGG.

This sequence belongs to the TatA/E family. The Tat system comprises two distinct complexes: a TatABC complex, containing multiple copies of TatA, TatB and TatC subunits, and a separate TatA complex, containing only TatA subunits. Substrates initially bind to the TatABC complex, which probably triggers association of the separate TatA complex to form the active translocon.

It is found in the cell inner membrane. Functionally, part of the twin-arginine translocation (Tat) system that transports large folded proteins containing a characteristic twin-arginine motif in their signal peptide across membranes. TatA could form the protein-conducting channel of the Tat system. This chain is Sec-independent protein translocase protein TatA, found in Dichelobacter nodosus (strain VCS1703A).